A 367-amino-acid chain; its full sequence is Undecaprenyl-phosphate alpha-N-acetylglucosaminyl 1-phosphate transferase (367 aa).

10 consecutive transmembrane segments (helical) span residues 3 to 23 (LLTV…FLFF), 46 to 66 (LIPL…FGIV), 69 to 89 (YIPH…IGAL), 132 to 152 (VLGP…INAF), 158 to 178 (IDGL…MILW), 187 to 207 (IWCF…LGIL), 213 to 233 (VFMG…ILLE), 242 to 262 (ISPV…VAIM), 294 to 314 (AFVL…LAEY), and 318 to 338 (VPEW…GYCI).

The protein belongs to the glycosyltransferase 4 family. WecA subfamily. Mg(2+) serves as cofactor. The cofactor is Mn(2+).

It is found in the cell inner membrane. The enzyme catalyses di-trans,octa-cis-undecaprenyl phosphate + UDP-N-acetyl-alpha-D-glucosamine = N-acetyl-alpha-D-glucosaminyl-di-trans,octa-cis-undecaprenyl diphosphate + UMP. It functions in the pathway bacterial outer membrane biogenesis; LPS O-antigen biosynthesis. Its pathway is bacterial outer membrane biogenesis; enterobacterial common antigen biosynthesis. Functionally, catalyzes the transfer of the GlcNAc-1-phosphate moiety from UDP-GlcNAc onto the carrier lipid undecaprenyl phosphate (C55-P), yielding GlcNAc-pyrophosphoryl-undecaprenyl (GlcNAc-PP-C55). The polypeptide is Undecaprenyl-phosphate alpha-N-acetylglucosaminyl 1-phosphate transferase (Escherichia coli O157:H7).